The primary structure comprises 202 residues: Nitrophorin-3 (202 aa).

The first 23 residues, 1-23 (MEPYSALLAVTILCLTSTMGVSG), serve as a signal peptide directing secretion. Cystine bridges form between Cys25–Cys144 and Cys62–Cys193. A heme-binding site is contributed by His80.

Belongs to the calycin superfamily. Nitrophorin family. As to quaternary structure, interacts weakly with host coagulation factor IX (F9) (inactive and activated) in the presence of Ca(2+). As to expression, salivary gland (at protein level).

It localises to the secreted. Its function is as follows. Heme-based protein that deliver nitric oxide gas (NO) to the victim while feeding, resulting in vasodilation and inhibition of platelet aggregation. Reversibly binds nitric oxide (NO). Also binds tightly to histamine, which is released by the host to induce wound healing. Exhibits weak anticoagulant activity. In Rhodnius prolixus (Triatomid bug), this protein is Nitrophorin-3.